Consider the following 309-residue polypeptide: DNA-directed RNA polymerase subunit alpha (309 aa).

The tract at residues 1–225 (MFQVQCLESA…SLFKLVNSAD (225 aa)) is alpha N-terminal domain (alpha-NTD). Positions 237-309 (IVQVSQTDVT…LHERFNLTLN (73 aa)) are alpha C-terminal domain (alpha-CTD).

It belongs to the RNA polymerase alpha chain family. In terms of assembly, in plastids the minimal PEP RNA polymerase catalytic core is composed of four subunits: alpha, beta, beta', and beta''. When a (nuclear-encoded) sigma factor is associated with the core the holoenzyme is formed, which can initiate transcription.

Its subcellular location is the plastid. It is found in the chloroplast. The catalysed reaction is RNA(n) + a ribonucleoside 5'-triphosphate = RNA(n+1) + diphosphate. DNA-dependent RNA polymerase catalyzes the transcription of DNA into RNA using the four ribonucleoside triphosphates as substrates. The protein is DNA-directed RNA polymerase subunit alpha of Emiliania huxleyi (Coccolithophore).